The sequence spans 546 residues: Medium-chain-fatty-acid--CoA ligase (546 aa).

Threonine 185 provides a ligand contact to Mg(2+). Positions 235 and 329 each coordinate ATP. Position 330 (glutamate 330) interacts with Mg(2+). Aspartate 417, lysine 434, lysine 438, and tryptophan 443 together coordinate ATP.

Belongs to the ATP-dependent AMP-binding enzyme family.

The protein localises to the cytoplasm. It catalyses the reaction a medium-chain fatty acid + ATP + CoA = a medium-chain fatty acyl-CoA + AMP + diphosphate. Its pathway is lipid metabolism; fatty acid metabolism. The chain is Medium-chain-fatty-acid--CoA ligase from Ectopseudomonas oleovorans (Pseudomonas oleovorans).